Consider the following 239-residue polypeptide: Sugar fermentation stimulation protein homolog (239 aa).

The protein belongs to the SfsA family.

The protein is Sugar fermentation stimulation protein homolog of Agrobacterium fabrum (strain C58 / ATCC 33970) (Agrobacterium tumefaciens (strain C58)).